A 323-amino-acid polypeptide reads, in one-letter code: RING-H2 finger protein ATL32 (323 aa).

Residues 1-28 (MMTRVECFNPHRWIILHVAIIIQSKANA) form the signal peptide. A helical membrane pass occupies residues 47–67 (TTVFAVLVTLFFLTGLLSVYI). Residues 124–166 (CAICLNELEDHETVRLLPICNHLFHIDCIDTWLYSHATCPVCR) form an RING-type; atypical zinc finger. Residues 210 to 229 (SSEISGKFPRSNSTGHSMDR) form a disordered region.

It belongs to the RING-type zinc finger family. ATL subfamily.

The protein resides in the membrane. The catalysed reaction is S-ubiquitinyl-[E2 ubiquitin-conjugating enzyme]-L-cysteine + [acceptor protein]-L-lysine = [E2 ubiquitin-conjugating enzyme]-L-cysteine + N(6)-ubiquitinyl-[acceptor protein]-L-lysine.. It functions in the pathway protein modification; protein ubiquitination. This is RING-H2 finger protein ATL32 (ATL32) from Arabidopsis thaliana (Mouse-ear cress).